The following is a 91-amino-acid chain: Small ribosomal subunit protein bS16 (91 aa).

Belongs to the bacterial ribosomal protein bS16 family.

The chain is Small ribosomal subunit protein bS16 from Phytoplasma australiense.